The chain runs to 34 residues: Voltage sensor toxin 3 (34 aa).

3 cysteine pairs are disulfide-bonded: cysteine 2–cysteine 17, cysteine 9–cysteine 22, and cysteine 16–cysteine 29.

Belongs to the neurotoxin 10 (Hwtx-1) family. 61 (VSTX3) subfamily. In terms of tissue distribution, expressed by the venom gland.

It is found in the secreted. Potent voltage-gated sodium channel blocker (IC(50)=190 nM and 210 nM on human and rat Nav1.3/SCN3A respectively, 430 nM on human Nav1.7/SCN9A, 770 nM and 290 nM on human and rat Nav1.8/SCN10A, respectively). Binds the voltage-sensor domain of the potassium channel KvAP (from Aeropyrum pernix) and weakly inhibits this channel. The sequence is that of Voltage sensor toxin 3 from Grammostola rosea (Chilean rose tarantula).